The following is a 767-amino-acid chain: TBC1 domain family member 16 (767 aa).

Disordered stretches follow at residues 93 to 138 (EALR…TPKD) and 169 to 228 (GVDG…SFDS). Basic residues predominate over residues 107-117 (KAPRPRGRRTR). A compositionally biased stretch (polar residues) spans 175 to 194 (PASQPACSPSGILSTVSPQD). Basic and acidic residues predominate over residues 197–206 (EEGREPRPEA). The region spanning 425–635 (GIDVSIRGEV…RIWEACWAHY (211 aa)) is the Rab-GAP TBC domain. The interval 729–767 (HPGSESCPYGGTVEMPSPKSLREGKKGPKTPQDGFGFRR) is disordered.

May act as a GTPase-activating protein for Rab family protein(s). This chain is TBC1 domain family member 16 (TBC1D16), found in Homo sapiens (Human).